The primary structure comprises 780 residues: Cullin-5 (780 aa).

The residue at position 34 (serine 34) is a Phosphoserine. Threonine 210 is modified (phosphothreonine). Residues 711–772 (RILRTQEAII…HKYIRRDESD (62 aa)) enclose the Cullin neddylation domain. Lysine 724 participates in a covalent cross-link: Glycyl lysine isopeptide (Lys-Gly) (interchain with G-Cter in NEDD8).

This sequence belongs to the cullin family. In terms of assembly, component of multiple cullin-5-RING E3 ubiquitin-protein ligase complexes (ECS complexes, also named CRL5 complexes) formed of CUL5, Elongin BC (ELOB and ELOC), RNF7/RBX2 and a variable SOCS box domain-containing protein as substrate-specific recognition component. CUL5-containing ECS complexes specifically contain RNF7/RBX2, and not RBX1, as catalytic subunit. Component of the ECS(ASB2) complex with the substrate recognition component ASB2. Component of the ECS(ASB6) complex with the substrate recognition component ASB6. Component of the ECS(ASB7) complex with the substrate recognition component ASB7. Component of the ECS(ASB9) complex with the substrate recognition component ASB9. Component of the ECS(ASB11) complex with the substrate recognition component ASB11. Component of the ECS(ASB12) complex with the substrate recognition component ASB12. Component of the ECS(LRRC41) complex with the substrate recognition component LRRC41. Component of the ECS(SOCS1) complex with the substrate recognition component SOCS1. Component of the ECS(SOCS2) complex with the substrate recognition component SOCS2. Component of the ECS(WSB1) complex with the substrate recognition subunit WSB1. Component of the ECS(SOCS3) complex with the substrate recognition component SOCS3. Component of the ECS(SOCS7) complex with the substrate recognition component SOCS7. Component of the ECS(SPSB1) complex with the substrate recognition component SPSB1. Component of the ECS(SPSB3) complex with the substrate recognition component SPSB3. Component of the ECS(SPSB2) complex with the substrate recognition component SPSB2. Component of the ECS(SPSB4) complex with the substrate recognition component SPSB4. Component of the ECS(RAB40) complex with the substrate recognition subunit RAB40A, RAB40B or RAB40C. Component of the ECS(KLHDC1) complex with the substrate recognition component KLHDC1. Component of the ECS(PCMTD1) complex with the substrate recognition subunit PCMTD1. May also form complexes containing RBX1 and ELOA or VHL; additional evidence is however required to confirm this result in vivo. Interacts (when neddylated) with ARIH2; leading to activate the E3 ligase activity of ARIH2. Interacts with ERCC6; the interaction is induced by DNA damaging agents or inhibitors of RNA polymerase II elongation. Interacts with ELOA (via the BC-box). Interacts (unneddylated form) with DCUN1D1, DCUN1D2, DCUN1D3, DCUN1D4 and DCUN1D5; these interactions promote the cullin neddylation. Post-translationally, neddylated; which enhances the ubiquitination activity of ECS complexes and prevents binding of the inhibitor CAND1. Deneddylated via its interaction with the COP9 signalosome (CSN).

The protein resides in the nucleus. The protein operates within protein modification; protein ubiquitination. Its function is as follows. Core component of multiple cullin-5-RING E3 ubiquitin-protein ligase complexes (ECS complexes, also named CRL5 complexes), which mediate the ubiquitination and subsequent proteasomal degradation of target proteins. Acts a scaffold protein that contributes to catalysis through positioning of the substrate and the ubiquitin-conjugating enzyme. The functional specificity of the E3 ubiquitin-protein ligase complex depends on the variable SOCS box-containing substrate recognition component. Acts as a key regulator of neuron positioning during cortex development: component of various SOCS-containing ECS complexes, such as the ECS(SOCS7) complex, that regulate reelin signaling by mediating ubiquitination and degradation of DAB1. ECS(SOCS1) seems to direct ubiquitination of JAK2. The ECS(SOCS2) complex mediates the ubiquitination and subsequent proteasomal degradation of phosphorylated EPOR and GHR. The ECS(SPSB3) complex catalyzes ubiquitination of nuclear CGAS. ECS(KLHDC1) complex is part of the DesCEND (destruction via C-end degrons) pathway and mediates ubiquitination and degradation of truncated SELENOS selenoprotein produced by failed UGA/Sec decoding, which ends with a glycine. The ECS(ASB9) complex mediates ubiquitination and degradation of CKB. As part of some ECS complex, promotes 'Lys-11'-linked ubiquitination and degradation of BTRC. As part of a multisubunit ECS complex, polyubiquitinates monoubiquitinated POLR2A. As part of the ECS(RAB40C) complex, mediates ANKRD28 ubiquitination and degradation, thereby regulating protein phosphatase 6 (PP6) complex activity and focal adhesion assembly during cell migration. As part of the ECS(RAB40A) complex, mediates RHOU 'Lys-48'-linked ubiquitination and degradation, thus inhibiting focal adhesion disassembly during cell migration. As part of the ECS(RAB40B) complex, mediates LIMA1/EPLIN and RAP2 ubiquitination, thereby regulating actin cytoskeleton dynamics and stress fiber formation during cell migration. May form a cell surface vasopressin receptor. The sequence is that of Cullin-5 from Pongo abelii (Sumatran orangutan).